Here is a 715-residue protein sequence, read N- to C-terminus: DNA ligase (715 aa).

NAD(+) contacts are provided by residues 47–51 (DADYD), 96–97 (SL), and glutamate 129. Lysine 131 acts as the N6-AMP-lysine intermediate in catalysis. Positions 152, 189, 306, and 330 each coordinate NAD(+). Zn(2+) is bound by residues cysteine 435, cysteine 438, cysteine 453, and cysteine 459. The 79-residue stretch at 637-715 (KRDSAVAGKT…EDEWLALIQG (79 aa)) folds into the BRCT domain.

This sequence belongs to the NAD-dependent DNA ligase family. LigA subfamily. The cofactor is Mg(2+). Requires Mn(2+) as cofactor.

It carries out the reaction NAD(+) + (deoxyribonucleotide)n-3'-hydroxyl + 5'-phospho-(deoxyribonucleotide)m = (deoxyribonucleotide)n+m + AMP + beta-nicotinamide D-nucleotide.. Its function is as follows. DNA ligase that catalyzes the formation of phosphodiester linkages between 5'-phosphoryl and 3'-hydroxyl groups in double-stranded DNA using NAD as a coenzyme and as the energy source for the reaction. It is essential for DNA replication and repair of damaged DNA. The sequence is that of DNA ligase from Rhodopseudomonas palustris (strain BisA53).